Reading from the N-terminus, the 459-residue chain is Acetyltransferase pigO (459 aa).

The protein belongs to the trichothecene O-acetyltransferase family.

It functions in the pathway secondary metabolite biosynthesis. Acetyltransferase; part of the gene cluster that mediates the biosynthesis of azaphilone pigments (MonAzPs), a complex mixture of compounds with a common azaphilone skeleton very widely used as food colorants. PigM and pigO are involved in the elimination of the omega-1 alcohol with pigM acting as an O-acetyltransferase that synthesizes the O-11 acetyl intermediate whereas pigO eliminates acetic acid to yield an intermediate with a C10(11) double bond. The first step of the pathway is performed by the nrPKS pigA that forms the hexaketide precursor from successive condensations of five malonyl-CoA units, with a simple acetyl-CoA starter unit. The role of esterase pigG is not clear, but it may play at most a supplementary role in the formation of the benzaldehyde produced by the pigA nrPKS. This very reactive benzaldehyde is intercepted by the pigC ketoreductase that to provide the first stable enzyme-free MonAzPs intermediate, 6-(4-hydroxy-2-oxopentyl)-3-methyl-2,4-dioxocyclohexane carbaldehyde, also known as M7PKS-1. The FAD-dependent monooxygenase pigN hydroxylates M7PKS-1 at C-4, which triggers the formation of the pyran ring. PigJ, pigK and pigD are involved in the acetylation of the pyran ring. PigJ and pigK form the two subunits of a dedicated fungal FAS that produces the side chain fatty acyl moiety of MonAzPs and pigD transfers the fatty acyl chain to the C-4 alcohol. PigM and pigO are involved in the elimination of the omega-1 alcohol. PigM acts as an O-acetyltransferase that synthesizes the putative O-11 acetyl intermediate whereas pigO eliminates acetic acid to yield an intermediate with a C10(11) double bond. The dehydration of the C-11 alcohol followed by the reduction of the C6(7) double bond by the NAD(P)H-dependent oxidoreductase pigE increases the electrophilicity of the C-5 ketone of the resulting acyl benzopyran. This in turn sets up the C-5 ketone for an intramolecular Knoevenagel aldol condensation with the C-20 enol of the side chain. This condensation affords the characteristic linear tricyclic carbon skeletons of the yellow pigments that serve as the common precursors for the classical yellow pigments monascin and ankaflavin, orange pigments rubopunctatin and monascorubrin, and red pigments ribropunctamine and monascorubramine. The FAD-dependent oxidoreductase pigF is especially invoved in the biosynthesis of orange and red pigments via desaturation of C6(7). The polypeptide is Acetyltransferase pigO (Monascus ruber (Mold)).